We begin with the raw amino-acid sequence, 248 residues long: MARQFFVGGNFKMNGTRESVSKIVDGLNKAELPSNVEVVIAPPAPYIALAVNENKQKTIEVSAQNCFDKASGAYTGEISPEQIKDLGATWTLTGHSERRTIIKESDDFIASKTKFALDQGLSVILCIGETLEERKANVTLDVCARQLDAVARVVSDWSKIVVAYEPVWAIGTGLAATPEDAQETHKAIREHLSKSIGADAAEKTRILYGGSVNGKNAPEFKDKADVDGFLVGGASLKPEFVDIIKSRL.

Substrate-binding residues include asparagine 10 and lysine 12. Catalysis depends on histidine 95, which acts as the Electrophile. Glutamate 165 functions as the Proton acceptor in the catalytic mechanism.

This sequence belongs to the triosephosphate isomerase family. In terms of assembly, homodimer.

It catalyses the reaction D-glyceraldehyde 3-phosphate = dihydroxyacetone phosphate. Its pathway is carbohydrate biosynthesis; gluconeogenesis. It functions in the pathway carbohydrate degradation; glycolysis; D-glyceraldehyde 3-phosphate from glycerone phosphate: step 1/1. The chain is Triosephosphate isomerase (TPI1) from Debaryomyces hansenii (strain ATCC 36239 / CBS 767 / BCRC 21394 / JCM 1990 / NBRC 0083 / IGC 2968) (Yeast).